Here is a 486-residue protein sequence, read N- to C-terminus: BTB/POZ domain and ankyrin repeat-containing protein NBCL (486 aa).

The BTB domain occupies 25 to 115; the sequence is SDVTFSVEGR…LYSGQVSIVP (91 aa). The C2HC NPR-type zinc finger occupies 121–135; the sequence is RPNCGERGCWHTHCS. Positions 124, 129, 131, and 134 each coordinate Zn(2+). ANK repeat units follow at residues 257–286, 287–316, 321–350, and 354–388; these read QKIRRMRRALDSSDVELVKLMVMGEGLNLD, EALALHYAVENCSREVVKALLELGAADVNY, AGKTPLHIAAEMVSPDMVAVLLDHHADPNV, and DNVTPLDILRTLTSDFLFKGAIPGLTHIEPNKLRL. 2 disordered regions span residues 403 to 441 and 464 to 486; these read EEGNANNNPPSSTTTTLPMYHHPMNDDHNSSSSSGNNHN and QMSDDHGGRHGDPAMYHHSHHDY. Low complexity-rich tracts occupy residues 406 to 418 and 432 to 441; these read NANNNPPSSTTTT and SSSSSGNNHN. Residues 466–475 show a composition bias toward basic and acidic residues; the sequence is SDDHGGRHGD.

Belongs to the plant 'ANKYRIN-BTB/POZ' family. 'NOOT-BOP-COCH-like' (NBCL) subfamily. As to quaternary structure, homodimer.

Its subcellular location is the nucleus. It is found in the cytoplasm. It localises to the cell membrane. The protein operates within protein modification; protein ubiquitination. May act as a substrate-specific adapter of an E3 ubiquitin-protein ligase complex (CUL3-RBX1-BTB) which mediates the ubiquitination and subsequent proteasomal degradation of target proteins. Transcriptional co-regulator involved in the promotion of leaf and floral meristem fate and determinacy. Necessary for the development of stipules at the base of petioles. Required for the abscission of senescent organs, probably by regulating the cell wall disorganization in abscission zones (AZs, e.g. pulvini at the base of leaves). Promotes slightly root-cap border cells separation from the root tip. Involved in the coordination of the symbiotic nodule developmental program; promotes the formation of root nodules by interacting directly with APP1 to modulate the expression of the nuclear transcription factor Y subunit (NF-YA1), a key nodulin. Necessary for the robust maintenance of nodule identity throughout the nodule developmental program. The chain is BTB/POZ domain and ankyrin repeat-containing protein NBCL from Lupinus angustifolius (Narrow-leaved blue lupine).